We begin with the raw amino-acid sequence, 200 residues long: Adenylate kinase (200 aa).

10–15 (GAGKGT) is an ATP binding site. The interval 30-59 (STGDLFRANISQQTELGKLAKSYMDAGNLV) is NMP. AMP-binding positions include T31, R36, 57–59 (NLV), 84–87 (GFPR), and Q91. Positions 125–163 (GRRVCRNDSAHVFHVTYTPPKKEGVCDVCGGELYQRDDD) are LID. ATP-binding positions include R126 and 136 to 137 (VF). The AMP site is built by R160 and R171.

Belongs to the adenylate kinase family. Monomer.

The protein resides in the cytoplasm. The enzyme catalyses AMP + ATP = 2 ADP. Its pathway is purine metabolism; AMP biosynthesis via salvage pathway; AMP from ADP: step 1/1. Functionally, catalyzes the reversible transfer of the terminal phosphate group between ATP and AMP. Plays an important role in cellular energy homeostasis and in adenine nucleotide metabolism. In Streptomyces lividans, this protein is Adenylate kinase.